Consider the following 1759-residue polypeptide: Putative ATP-dependent RNA helicase TDRD12 (1759 aa).

In terms of domain architecture, Tudor 1 spans 74–153; that stretch reads FQNLEQVWFS…KLSNTETRAV (80 aa). The segment covering 480–495 has biased composition (low complexity); it reads NSAASESSTKSSMDSS. Positions 480–506 are disordered; that stretch reads NSAASESSTKSSMDSSRISDEDDLSSD. The Helicase ATP-binding domain occupies 611–789; it reads WGTILRGLST…DFLEPIVLKA (179 aa). ATP is bound at residue 624 to 631; sequence SPPRSGKT. Residues 823-980 enclose the Helicase C-terminal domain; that stretch reads NVLQFIDSVQ…NVPKILDEVS (158 aa). The 60-residue stretch at 1335–1394 folds into the Tudor 2 domain; that stretch reads GSNVGDIVLAKFPDDSMYERARIDHIYSEDKVKCFFVDQGDWRDVSTNDLATITENFITQ. The region spanning 1618-1704 is the CS domain; that stretch reads LSKPKICWSQ…LMCRNWLALT (87 aa).

Interacts (via Tudor domain 2) with Siwi. Component of the PET complex, at least composed of EXD1, SIWI, TDRD12 and piRNAs. Expressed in the yolk cells. Not detected in yolk granules.

The protein resides in the chromosome. The protein localises to the cytoplasm. It localises to the cytosol. It is found in the nucleus membrane. It carries out the reaction ATP + H2O = ADP + phosphate + H(+). In terms of biological role, probable ATP-binding RNA helicase required during spermatogenesis to repress transposable elements and preventing their mobilization, which is essential for the germline integrity. Acts via the piRNA metabolic process, which mediates the repression of transposable elements during meiosis by forming complexes composed of piRNAs and Piwi proteins and governs the methylation and subsequent repression of transposons. The chain is Putative ATP-dependent RNA helicase TDRD12 (TDRD12) from Bombyx mori (Silk moth).